We begin with the raw amino-acid sequence, 449 residues long: Cytochrome P450 2E1 (449 aa).

A substrate-binding site is contributed by 254-259 (FAGTET). Cys-393 serves as a coordination point for heme.

The protein belongs to the cytochrome P450 family. Interacts with chaperones HSP70 and HSP90; this interaction is required for initial targeting to mitochondria. It depends on heme as a cofactor.

It localises to the endoplasmic reticulum membrane. It is found in the microsome membrane. The protein resides in the mitochondrion inner membrane. The catalysed reaction is an organic molecule + reduced [NADPH--hemoprotein reductase] + O2 = an alcohol + oxidized [NADPH--hemoprotein reductase] + H2O + H(+). The enzyme catalyses (5Z,8Z,11Z)-eicosatrienoate + reduced [NADPH--hemoprotein reductase] + O2 = 19-hydroxy-(5Z,8Z,11Z)-eicosatrienoate + oxidized [NADPH--hemoprotein reductase] + H2O + H(+). It carries out the reaction (5Z,8Z,11Z,14Z,17Z)-eicosapentaenoate + reduced [NADPH--hemoprotein reductase] + O2 = 19-hydroxy-(5Z,8Z,11Z,14Z,17Z)-eicosapentaenoate + oxidized [NADPH--hemoprotein reductase] + H2O + H(+). It catalyses the reaction (4Z,7Z,10Z,13Z,16Z,19Z)-docosahexaenoate + reduced [NADPH--hemoprotein reductase] + O2 = 21-hydroxy-(4Z,7Z,10Z,13Z,16Z,19Z)-docosahexaenoate + oxidized [NADPH--hemoprotein reductase] + H2O + H(+). The catalysed reaction is dodecanoate + reduced [NADPH--hemoprotein reductase] + O2 = 11-hydroxydodecanoate + oxidized [NADPH--hemoprotein reductase] + H2O + H(+). The enzyme catalyses tetradecanoate + reduced [NADPH--hemoprotein reductase] + O2 = 13-hydroxytetradecanoate + oxidized [NADPH--hemoprotein reductase] + H2O + H(+). It carries out the reaction 4-nitrophenol + NADPH + O2 + H(+) = 4-nitrocatechol + NADP(+) + H2O. The protein operates within lipid metabolism; fatty acid metabolism. With respect to regulation, the omega-1 hydroxylase activity is stimulated by cytochrome b5. In terms of biological role, a cytochrome P450 monooxygenase involved in the metabolism of fatty acids. Mechanistically, uses molecular oxygen inserting one oxygen atom into a substrate, and reducing the second into a water molecule, with two electrons provided by NADPH via cytochrome P450 reductase (NADPH--hemoprotein reductase). Catalyzes the hydroxylation of carbon-hydrogen bonds. Hydroxylates fatty acids specifically at the omega-1 position displaying the highest catalytic activity for saturated fatty acids. May be involved in the oxidative metabolism of xenobiotics. This Macaca fascicularis (Crab-eating macaque) protein is Cytochrome P450 2E1 (CYP2E1).